We begin with the raw amino-acid sequence, 105 residues long: Met repressor (105 aa).

This sequence belongs to the MetJ family. In terms of assembly, homodimer.

It is found in the cytoplasm. Functionally, this regulatory protein, when combined with SAM (S-adenosylmethionine) represses the expression of the methionine regulon and of enzymes involved in SAM synthesis. In Haemophilus ducreyi (strain 35000HP / ATCC 700724), this protein is Met repressor.